Reading from the N-terminus, the 175-residue chain is Putative lipoprotein LppN (175 aa).

Positions Met1–Ala20 are cleaved as a signal peptide. Residue Cys21 is the site of N-palmitoyl cysteine attachment. Residue Cys21 is the site of S-diacylglycerol cysteine attachment. The segment at Ala31–Gln56 is disordered. A compositionally biased stretch (low complexity) spans Thr33–Thr48.

It is found in the cell membrane. The sequence is that of Putative lipoprotein LppN (lppN) from Mycobacterium bovis (strain ATCC BAA-935 / AF2122/97).